A 374-amino-acid chain; its full sequence is MMTLQSSPMSVLTEDLVEDILSRVPATSLVRLRSTCKQWNAILNDRRFIKKHFDTAEKEYLDMLLRSLRVSSMSVNLHGLHDNIDPSIELKRELNLKGLLCNSGKVESFEVFHCNGLLLFTNTSTIVVWNPCTGQTKWIQTESANTRYHKYALGYENKNLCRDYKILRFLDDGTNFELEIYEFNSSSWRVLDSVEIDFELDIGSQGMSVKGNTYWIVIDDHEVDGELVNCFLTSFDFTRERFGPHVCLPFQTSWYSDVISLSSVREERLSVLFHEEDSLTMEIWVTNDITDTIVTSWSKFLRVDLYTHRFYNGVTFFIDEENKAAVFSEDVPDDSDDIHSIVYIIGQDRLRIVDLEDGPFWPQMFCYVPSLVQI.

The F-box domain maps to 6–52; the sequence is SSPMSVLTEDLVEDILSRVPATSLVRLRSTCKQWNAILNDRRFIKKH.

The chain is Putative F-box protein At3g17480 from Arabidopsis thaliana (Mouse-ear cress).